We begin with the raw amino-acid sequence, 710 residues long: Integrator complex subunit 10 (710 aa).

Residues 366–393 (IHKKRKLAEGREKTMSSDDEDPSGKARS) form a disordered region. Positions 372-381 (LAEGREKTMS) are enriched in basic and acidic residues.

Belongs to the Integrator subunit 10 family. In terms of assembly, component of the Integrator complex, composed of core subunits INTS1, INTS2, INTS3, INTS4, INTS5, INTS6, INTS7, INTS8, INTS9/RC74, INTS10, INTS11/CPSF3L, INTS12, INTS13, INTS14 and INTS15. The core complex associates with protein phosphatase 2A subunits PPP2CA and PPP2R1A, to form the Integrator-PP2A (INTAC) complex. INTS10 is part of the tail subcomplex, composed of INTS10, INTS13, INTS14 and INTS15.

The protein resides in the nucleus. Component of the integrator complex, a multiprotein complex that terminates RNA polymerase II (Pol II) transcription in the promoter-proximal region of genes. The integrator complex provides a quality checkpoint during transcription elongation by driving premature transcription termination of transcripts that are unfavorably configured for transcriptional elongation: the complex terminates transcription by (1) catalyzing dephosphorylation of the C-terminal domain (CTD) of Pol II subunit POLR2A/RPB1 and SUPT5H/SPT5, (2) degrading the exiting nascent RNA transcript via endonuclease activity and (3) promoting the release of Pol II from bound DNA. The integrator complex is also involved in terminating the synthesis of non-coding Pol II transcripts, such as enhancer RNAs (eRNAs), small nuclear RNAs (snRNAs), telomerase RNAs and long non-coding RNAs (lncRNAs). The chain is Integrator complex subunit 10 (INTS10) from Gallus gallus (Chicken).